A 657-amino-acid polypeptide reads, in one-letter code: MAKETFYITTPIYYPSGNLHIGHAYSTVAGDVIARYKRMQGYDVRYLTGTDEHGQKIQEKAQKAGKTEIEYLDEMIAGIKQLWAKLEISNDDFIRTTEERHKHVVEQVFERLLKQGDIYLGEYEGWYSVPDETYYTESQLVDPQYENGKIIGGKSPDSGHEVELVKEESYFFNISKYTDRLLEFYDQNPDFIQPPSRKNEMINNFIKPGLADLAVSRTSFNWGVHVPSNPKHVVYVWIDALVNYISALGYLSDDESLFNKYWPADIHLMAKEIVRFHSIIWPILLMALDLPLPKKVFAHGWILMKDGKMSKSKGNVVDPNILIDRYGLDATRYYLMRELPFGSDGVFTPEAFVERTNFDLANDLGNLVNRTISMINKYFDGELPAYQGPLHELDEEMEAMALETVKSYTESMESLQFSVALSTVWKFISRTNKYIDETTPWVLAKDDSQKDMLGNVMAHLVENIRYAAVLLRPFLTHAPKEIFEQLNINNPQFMEFSSLEQYGVLTEPIMVTGQPKPIFPRLDSEAEIAYIKESMQPPATEEEKEEIPSKPQIDIKDFDKVEIKAATIIDAEHVKKSDKLLKIQVDLDSEQRQIVSGIAKFYTPDDIIGKKVAVVTNLKPAKLMGQKSEGMILSAEKDGVLTLVSLPSAIPNGAVIK.

The 'HIGH' region motif lies at 13 to 23 (YYPSGNLHIGH). Positions 308–312 (KMSKS) match the 'KMSKS' region motif. Lys311 contacts ATP. Residues 557 to 657 (DFDKVEIKAA…SAIPNGAVIK (101 aa)) form the tRNA-binding domain.

This sequence belongs to the class-I aminoacyl-tRNA synthetase family. MetG type 2B subfamily. As to quaternary structure, homodimer.

It is found in the cytoplasm. The enzyme catalyses tRNA(Met) + L-methionine + ATP = L-methionyl-tRNA(Met) + AMP + diphosphate. In terms of biological role, is required not only for elongation of protein synthesis but also for the initiation of all mRNA translation through initiator tRNA(fMet) aminoacylation. This Staphylococcus aureus (strain MRSA252) protein is Methionine--tRNA ligase.